We begin with the raw amino-acid sequence, 346 residues long: HLA class I histocompatibility antigen, alpha chain F (346 aa).

Positions 1 to 21 (MAPRSLLLLLSGALALTDTWA) are cleaved as a signal peptide. Positions 22-111 (GSHSLRYFST…LLRRYNQSEA (90 aa)) are alpha-1. Residues 22–305 (GSHSLRYFST…EQSPQPTIPI (284 aa)) are Extracellular-facing. Residues asparagine 91 and arginine 105 each contribute to the a peptide antigen site. An N-linked (GlcNAc...) asparagine glycan is attached at asparagine 107. An alpha-2 region spans residues 112 to 203 (GSHTLQGMNG…ENGKETLQRA (92 aa)). 2 cysteine pairs are disulfide-bonded: cysteine 122–cysteine 185 and cysteine 224–cysteine 280. Residues threonine 164, tyrosine 168, and glutamate 176 each contribute to the a peptide antigen site. Residues 204-295 (DPPKAHVAHH…GLPQPLILRW (92 aa)) form an alpha-3 region. An Ig-like C1-type domain is found at 206–296 (PKAHVAHHPI…LPQPLILRWE (91 aa)). The connecting peptide stretch occupies residues 296 to 305 (EQSPQPTIPI). A helical membrane pass occupies residues 306 to 329 (VGIVAGLVVLGAVVTGAVVAAVMW). The Cytoplasmic segment spans residues 330-346 (RKKSSDRNRGSYSQAAV). The short motif at 336 to 338 (RNR) is the Sorting signal sequence; Golgi-retention signal; ER-retention signal element.

Belongs to the MHC class I family. In terms of assembly, forms a heterotrimer with B2M and a self-peptide. Binds a diverse number of peptides ranging from 7 to more than 30 amino acids. Peptide-bound HLA-F-B2M interacts with LILRB1 and LILRB2 but not with KIR3DS1 or KIR3DL2; this interaction is direct. The OC form interacts with KIR3DS1, KIR2DS4 and KIR3DL2; this interaction is direct. Interacts with TAP1-TAP2 complex and CALR; this interaction is required for appropriate folding and peptide loading. Interacts with the coat protein complex II and 14-3-3 proteins; these interactions likely control the anterograde ER-to-Golgi transport of HLA-F. HLA-F-B2M complex interacts with the heavy chain of other MHC class I molecules including HLA-A and HLA-E; this interaction may regulate the intracellular trafficking and the stability of peptide-free MHC class I OCs. In terms of processing, N-glycosylated. In terms of tissue distribution, expressed in resting B cells (at protein level). Expressed in secondary lymphoid organs rich in B and T cells such as the tonsils, spleen, and thymus (at protein level). Expressed in the endothelial cells of the tonsils. Expressed on activated lymphoid cells including B cells, NK cells, CD4+ T cells and memory T cells (at protein level). Expressed in motor neurons of spinal cord.

The protein localises to the cell membrane. It is found in the early endosome membrane. It localises to the lysosome membrane. Its function is as follows. Non-classical major histocompatibility class Ib molecule postulated to play a role in immune surveillance, immune tolerance and inflammation. Functions in two forms, as a heterotrimeric complex with B2M/beta-2 microglobulin and a peptide (peptide-bound HLA-F-B2M) and as an open conformer (OC) devoid of peptide and B2M (peptide-free OC). In complex with B2M, presents non-canonical self-peptides carrying post-translational modifications, particularly phosphorylated self-peptides. Peptide-bound HLA-F-B2M acts as a ligand for LILRB1 inhibitory receptor, a major player in maternal-fetal tolerance. Peptide-free OC acts as a ligand for KIR3DS1 and KIR3DL2 receptors. Upon interaction with activating KIR3DS1 receptor on NK cells, triggers NK cell degranulation and anti-viral cytokine production. Through interaction with KIR3DL2 receptor, inhibits NK and T cell effector functions. May interact with other MHC class I OCs to cross-present exogenous viral, tumor or minor histompatibility antigens to cytotoxic CD8+ T cells, triggering effector and memory responses. May play a role in inflammatory responses in the peripheral nervous system. Through interaction with KIR3DL2, may protect motor neurons from astrocyte-induced toxicity. In Homo sapiens (Human), this protein is HLA class I histocompatibility antigen, alpha chain F.